Consider the following 340-residue polypeptide: MQKIAVIGAGSWGSALAMVLADNGHDVRLVGRRQEQMDELNERHTNESYLPNIELPTTIRGYTGMEEALGGVEAIVLVVPTKAMRETVRKIVPYLQKAVPVIHASKGIEPATHKRISEMIAEEDASTNRISSITVLSGPSHAEEVALRQPTTVTVASADDEAAKYTQNLFMNQQFRVYTNPDLIGVEIGGALKNIIALACGVTNGLGYGDNTKAAIMTRGLAEISRLGTTMGAKPLTFSGLSGLGDLIVTCTSVHSRNWRAGRMIGEGLSMDEVLEKMGMVVEGIRTTQAAYELSEKLEIDMPVTKALYSVLFNGIDPYQAAEELMGRVKRHEVESLYRS.

NADPH contacts are provided by serine 11, tryptophan 12, arginine 32, arginine 33, and lysine 106. Residues lysine 106, glycine 138, and serine 140 each coordinate sn-glycerol 3-phosphate. Alanine 142 is a binding site for NADPH. Residues lysine 193, aspartate 246, serine 256, arginine 257, and asparagine 258 each contribute to the sn-glycerol 3-phosphate site. Lysine 193 serves as the catalytic Proton acceptor. Arginine 257 is an NADPH binding site. Residues valine 281 and glutamate 283 each coordinate NADPH.

Belongs to the NAD-dependent glycerol-3-phosphate dehydrogenase family.

It localises to the cytoplasm. The catalysed reaction is sn-glycerol 3-phosphate + NAD(+) = dihydroxyacetone phosphate + NADH + H(+). It catalyses the reaction sn-glycerol 3-phosphate + NADP(+) = dihydroxyacetone phosphate + NADPH + H(+). Its pathway is membrane lipid metabolism; glycerophospholipid metabolism. Catalyzes the reduction of the glycolytic intermediate dihydroxyacetone phosphate (DHAP) to sn-glycerol 3-phosphate (G3P), the key precursor for phospholipid synthesis. This Shouchella clausii (strain KSM-K16) (Alkalihalobacillus clausii) protein is Glycerol-3-phosphate dehydrogenase [NAD(P)+].